The chain runs to 404 residues: Agnestins biosynthesis cluster transcription factor AgnL10 (404 aa).

A DNA-binding region (zn(2)-C6 fungal-type) is located at residues 23–50 (CNRCAVSKIKCSKEKPACARCAKQDKVC). Disordered regions lie at residues 54–83 (ATKR…PTAA), 188–209 (ASAS…PSSG), and 294–318 (PGPD…AGVD). Basic residues predominate over residues 57–68 (RAGRKRGSRRHN). Over residues 74-83 (PTTQDLPTAA) the composition is skewed to polar residues. Residues 188 to 197 (ASASSMDPAA) show a composition bias toward low complexity.

It is found in the nucleus. In terms of biological role, transcription factor that regulates the expression of the gene cluster that mediates the biosynthesis of agnestins, dihydroxy-xanthone metabolites. The polypeptide is Agnestins biosynthesis cluster transcription factor AgnL10 (Paecilomyces divaricatus (Penicillium divaricatum)).